A 485-amino-acid polypeptide reads, in one-letter code: Membrane-bound lytic murein transglycosylase F (485 aa).

Positions 1 to 29 (MFAHTALRQRCAKWLLATGLFLLLGACVE) are cleaved as a signal peptide. The interval 30–267 (KPSTLERVKE…RLKDRYYGHV (238 aa)) is non-LT domain. The LT domain stretch occupies residues 268–485 (DVLGYVGAYT…DKPADKSSPM (218 aa)). Glu-314 is an active-site residue. Residues 465-485 (EGNLHVPGVNKDKPADKSSPM) form a disordered region. A compositionally biased stretch (basic and acidic residues) spans 474-485 (NKDKPADKSSPM).

This sequence in the N-terminal section; belongs to the bacterial solute-binding protein 3 family. In the C-terminal section; belongs to the transglycosylase Slt family.

The protein localises to the cell outer membrane. The catalysed reaction is Exolytic cleavage of the (1-&gt;4)-beta-glycosidic linkage between N-acetylmuramic acid (MurNAc) and N-acetylglucosamine (GlcNAc) residues in peptidoglycan, from either the reducing or the non-reducing ends of the peptidoglycan chains, with concomitant formation of a 1,6-anhydrobond in the MurNAc residue.. Murein-degrading enzyme that degrades murein glycan strands and insoluble, high-molecular weight murein sacculi, with the concomitant formation of a 1,6-anhydromuramoyl product. Lytic transglycosylases (LTs) play an integral role in the metabolism of the peptidoglycan (PG) sacculus. Their lytic action creates space within the PG sacculus to allow for its expansion as well as for the insertion of various structures such as secretion systems and flagella. This chain is Membrane-bound lytic murein transglycosylase F, found in Pseudomonas putida (strain ATCC 700007 / DSM 6899 / JCM 31910 / BCRC 17059 / LMG 24140 / F1).